The primary structure comprises 331 residues: Vitamin B12 import system permease protein BtuC (331 aa).

7 consecutive transmembrane segments (helical) span residues 21 to 43 (LALL…ERWI), 63 to 85 (PRTL…MQAV), 90 to 112 (LAEP…TVLL), 116 to 138 (LLPV…FLLL), 151 to 173 (LLIG…YFST), 193 to 210 (WRHG…LWLS), and 239 to 261 (VLVL…IAFI).

This sequence belongs to the binding-protein-dependent transport system permease family. FecCD subfamily. As to quaternary structure, the complex is composed of two ATP-binding proteins (BtuD), two transmembrane proteins (BtuC) and a solute-binding protein (BtuF).

Its subcellular location is the cell inner membrane. In terms of biological role, part of the ABC transporter complex BtuCDF involved in vitamin B12 import. Involved in the translocation of the substrate across the membrane. The chain is Vitamin B12 import system permease protein BtuC from Pectobacterium atrosepticum (strain SCRI 1043 / ATCC BAA-672) (Erwinia carotovora subsp. atroseptica).